Here is a 330-residue protein sequence, read N- to C-terminus: MKIAVIGGGSWGTTLADLAAKKGLDARLWVREQAVMNEIRSSRENSWYLPGRKLSDQLEVSTDPAAVAEGVSHFVFAVPCQFIRAAYQRFIKYLPKNAVVICASKGIELDTLMTMSQVCQDALASIKPRFAMLSGPSFAYEVIREMPTAVTLACKDKKAAKDVQEALSTPYFRIYTTTDVRGVELGGAIKNIVAIAAGVADGLGFGGDARAALITRGLHEMSRLGKAMGGDRQTFMGLSGMGDLVLTCTGDLSRNRQVGLRLAKGQKLLDILADMKMVAEGVKTAEAVHALGQKLGVEMPITEQVYAILYKDKDPSKAVYELMTRDLKDE.

NADPH contacts are provided by Ser10, Trp11, Arg31, and Lys105. Sn-glycerol 3-phosphate contacts are provided by Lys105, Gly135, and Ser137. NADPH is bound at residue Ala139. Sn-glycerol 3-phosphate is bound by residues Lys190, Asp243, Ser253, Arg254, and Asn255. Catalysis depends on Lys190, which acts as the Proton acceptor. Residue Arg254 coordinates NADPH. Residues Val278 and Glu280 each contribute to the NADPH site.

This sequence belongs to the NAD-dependent glycerol-3-phosphate dehydrogenase family.

The protein localises to the cytoplasm. It carries out the reaction sn-glycerol 3-phosphate + NAD(+) = dihydroxyacetone phosphate + NADH + H(+). The enzyme catalyses sn-glycerol 3-phosphate + NADP(+) = dihydroxyacetone phosphate + NADPH + H(+). The protein operates within membrane lipid metabolism; glycerophospholipid metabolism. Functionally, catalyzes the reduction of the glycolytic intermediate dihydroxyacetone phosphate (DHAP) to sn-glycerol 3-phosphate (G3P), the key precursor for phospholipid synthesis. The protein is Glycerol-3-phosphate dehydrogenase [NAD(P)+] of Solidesulfovibrio magneticus (strain ATCC 700980 / DSM 13731 / RS-1) (Desulfovibrio magneticus).